The following is a 247-amino-acid chain: 2,3-bisphosphoglycerate-dependent phosphoglycerate mutase (247 aa).

Residues 8 to 15 (RHGESQWN), 21 to 22 (TG), R60, 87 to 90 (ERHY), K98, 114 to 115 (RR), and 183 to 184 (GN) contribute to the substrate site. H9 (tele-phosphohistidine intermediate) is an active-site residue. E87 serves as the catalytic Proton donor/acceptor.

Belongs to the phosphoglycerate mutase family. BPG-dependent PGAM subfamily.

It carries out the reaction (2R)-2-phosphoglycerate = (2R)-3-phosphoglycerate. The protein operates within carbohydrate degradation; glycolysis; pyruvate from D-glyceraldehyde 3-phosphate: step 3/5. Functionally, catalyzes the interconversion of 2-phosphoglycerate and 3-phosphoglycerate. This Chlorobium phaeobacteroides (strain DSM 266 / SMG 266 / 2430) protein is 2,3-bisphosphoglycerate-dependent phosphoglycerate mutase.